Reading from the N-terminus, the 54-residue chain is UPF0391 membrane protein Bpro_0879 (54 aa).

2 helical membrane passes run 6-26 (VVFL…IAAG) and 30-50 (IAKI…VMGL).

This sequence belongs to the UPF0391 family.

The protein localises to the cell membrane. The polypeptide is UPF0391 membrane protein Bpro_0879 (Polaromonas sp. (strain JS666 / ATCC BAA-500)).